We begin with the raw amino-acid sequence, 365 residues long: Histidinol-phosphate aminotransferase (365 aa).

Lys-223 bears the N6-(pyridoxal phosphate)lysine mark.

This sequence belongs to the class-II pyridoxal-phosphate-dependent aminotransferase family. Histidinol-phosphate aminotransferase subfamily. Homodimer. Requires pyridoxal 5'-phosphate as cofactor.

It carries out the reaction L-histidinol phosphate + 2-oxoglutarate = 3-(imidazol-4-yl)-2-oxopropyl phosphate + L-glutamate. It functions in the pathway amino-acid biosynthesis; L-histidine biosynthesis; L-histidine from 5-phospho-alpha-D-ribose 1-diphosphate: step 7/9. The chain is Histidinol-phosphate aminotransferase from Brucella abortus (strain 2308).